Here is a 277-residue protein sequence, read N- to C-terminus: Large ribosomal subunit protein uL2 (277 aa).

Disordered regions lie at residues 1–58 and 223–277; these read MGIR…GGGH and GVVM…GKKR. Positions 23–33 are enriched in basic and acidic residues; that stretch reads EITRSEPEKSL. Over residues 37 to 58 the composition is skewed to basic residues; sequence LHGRGGRNAHGKITTRHKGGGH. Residues 251 to 267 show a composition bias toward basic and acidic residues; the sequence is GKPEGRTRRNKPSDKLI. Residues 268–277 are compositionally biased toward basic residues; the sequence is VRRRRTGKKR.

It belongs to the universal ribosomal protein uL2 family. As to quaternary structure, part of the 50S ribosomal subunit. Forms a bridge to the 30S subunit in the 70S ribosome.

One of the primary rRNA binding proteins. Required for association of the 30S and 50S subunits to form the 70S ribosome, for tRNA binding and peptide bond formation. It has been suggested to have peptidyltransferase activity; this is somewhat controversial. Makes several contacts with the 16S rRNA in the 70S ribosome. This Saccharopolyspora erythraea (strain ATCC 11635 / DSM 40517 / JCM 4748 / NBRC 13426 / NCIMB 8594 / NRRL 2338) protein is Large ribosomal subunit protein uL2.